The following is a 275-amino-acid chain: Trypsin-3 (275 aa).

Positions 1–22 (MISNKIAILLAVLVVAVACAQA) are cleaved as a signal peptide. A propeptide spans 23 to 48 (RVALKHRSVQALPRFLPRPKYDVGHR) (activation peptide). The 226-residue stretch at 49 to 274 (IVGGFEIDVS…VRDWVRENSG (226 aa)) folds into the Peptidase S1 domain. C74 and C90 are oxidised to a cystine. Catalysis depends on charge relay system residues H89 and D134. 2 cysteine pairs are disulfide-bonded: C199-C215 and C226-C250. The Charge relay system role is filled by S230.

It belongs to the peptidase S1 family. As to expression, expressed in the midgut. Expression levels drop a few hours after blood feeding and pick up again 28 hours later.

It localises to the secreted. The catalysed reaction is Preferential cleavage: Arg-|-Xaa, Lys-|-Xaa.. In terms of biological role, constitutive trypsin that is expressed 2 days after emergence, coinciding with host seeking behavior of the female. The sequence is that of Trypsin-3 (TRYP3) from Anopheles gambiae (African malaria mosquito).